The chain runs to 95 residues: MASETVSNHQEKALALLQADAEKILRLIKVQMDHLTMPQCPLYEEVLDTQMFGLSREVDFAVRLGLISEEQGKAMLGELERELSALHEAFTNKQQ.

It belongs to the UPF0358 family.

The polypeptide is UPF0358 protein BCE_3996 (Bacillus cereus (strain ATCC 10987 / NRS 248)).